The sequence spans 529 residues: DEP domain-containing protein 1B (529 aa).

In terms of domain architecture, DEP spans 24 to 108 (FRAGMPLRKH…DDGHLYRFPP (85 aa)). Positions 192 to 393 (ARLQKVLGLD…FLMDNYQEIL (202 aa)) constitute a Rho-GAP domain.

The sequence is that of DEP domain-containing protein 1B (DEPDC1B) from Gallus gallus (Chicken).